A 624-amino-acid polypeptide reads, in one-letter code: MDLNQRKEKKGQHVGCCGSRTDLSADTVELIERMDRLAENQATASMSIVALPSSFQESNSSDRCRKYCSSDEDSDTCIHGSANASTNATTNSSTNATTTASINVRTSATTTASINVRTSATTTESTNSNTNATTTESTNSSTNATTTASINVRTSATTTESTNSNTSATTTESTDSNTSATTTESTDSNTSATTTASTNSSTNATTTASTNSSTNATTTESTNASAKEDANKDGNAEDNRFHPVTDINKESYKRKGSQMVLLERKKLKAQFPNTSENMNVLQFLGFRSDEIKHLFLYGIDIYFCPEGVFTQYGLCKGCQKMFELCVCWAGQKVSYRRMAWEALAVERMLRNDEEYKEYLEDIEPYHGDPVGYLKFFSVKRGEIYSQIQRNYAWYLAITRRRETISVLDSTRGKQGSQVFRMSGRQIKELYYKVWSNLRESKTEVLQYFLNWDEKKCREEWEAKDDTVFVEALEKVGVFQRLRSMTSAGLQGPQYVKLQFSRHHRQLRSRYELSLGMHLRDQLALGVTPSKVPHWTAFLSMLIGLFYNKTFRQKLEYLLEQISEVWLLPHWVDLANVEVLAADNTRVPLYMLMVAVHKELDSDDVPDGRFDIILLCRDSSREVGE.

The tract at residues 113-249 is disordered; sequence SINVRTSATT…RFHPVTDINK (137 aa). Residues 118–225 are compositionally biased toward low complexity; the sequence is TSATTTESTN…ATTTESTNAS (108 aa). Positions 226–249 are enriched in basic and acidic residues; that stretch reads AKEDANKDGNAEDNRFHPVTDINK.

This is an uncharacterized protein from Saccharomyces cerevisiae (strain ATCC 204508 / S288c) (Baker's yeast).